We begin with the raw amino-acid sequence, 207 residues long: Probable GTP-binding protein EngB (207 aa).

An EngB-type G domain is found at glycine 23–proline 203. Residues glycine 31–serine 38, glycine 58–leucine 62, aspartate 83–glycine 86, threonine 150–aspartate 153, and phenylalanine 182–serine 184 contribute to the GTP site. Residues serine 38 and threonine 60 each contribute to the Mg(2+) site.

The protein belongs to the TRAFAC class TrmE-Era-EngA-EngB-Septin-like GTPase superfamily. EngB GTPase family. Requires Mg(2+) as cofactor.

Functionally, necessary for normal cell division and for the maintenance of normal septation. The sequence is that of Probable GTP-binding protein EngB from Bordetella bronchiseptica (strain ATCC BAA-588 / NCTC 13252 / RB50) (Alcaligenes bronchisepticus).